A 20-amino-acid chain; its full sequence is Unknown protein NF007 from 2D-PAGE (20 aa).

The polypeptide is Unknown protein NF007 from 2D-PAGE (Naegleria fowleri (Brain eating amoeba)).